We begin with the raw amino-acid sequence, 379 residues long: Chaperone protein DnaJ (379 aa).

A J domain is found at 5–70 (DYYEILGLDK…QKKAQYDQFG (66 aa)). The CR-type zinc finger occupies 135–217 (GVEKEISVTR…CRGKGIVRKH (83 aa)). The Zn(2+) site is built by C148, C151, C165, C168, C191, C194, C205, and C208. CXXCXGXG motif repeat units follow at residues 148–155 (CETCNGTG), 165–172 (CDKCNGTG), 191–198 (CDKCGGRG), and 205–212 (CEECRGKG).

Belongs to the DnaJ family. In terms of assembly, homodimer. Requires Zn(2+) as cofactor.

The protein resides in the cytoplasm. Its function is as follows. Participates actively in the response to hyperosmotic and heat shock by preventing the aggregation of stress-denatured proteins and by disaggregating proteins, also in an autonomous, DnaK-independent fashion. Unfolded proteins bind initially to DnaJ; upon interaction with the DnaJ-bound protein, DnaK hydrolyzes its bound ATP, resulting in the formation of a stable complex. GrpE releases ADP from DnaK; ATP binding to DnaK triggers the release of the substrate protein, thus completing the reaction cycle. Several rounds of ATP-dependent interactions between DnaJ, DnaK and GrpE are required for fully efficient folding. Also involved, together with DnaK and GrpE, in the DNA replication of plasmids through activation of initiation proteins. This Clostridium kluyveri (strain ATCC 8527 / DSM 555 / NBRC 12016 / NCIMB 10680 / K1) protein is Chaperone protein DnaJ.